The primary structure comprises 408 residues: BTB/POZ and MATH domain-containing protein 3 (408 aa).

The MATH domain maps to 24 to 158 (NGSHQFTIQG…DDCLVINCTV (135 aa)). A BTB domain is found at 194 to 261 (CDIAFQVGDE…IYTDVLPNVH (68 aa)).

Belongs to the Tdpoz family. In terms of assembly, homodimer or heterodimer with BPM3 and BPM5. Interacts with CUL3A and CUL3B. Interacts with RAP2-4 and RAP2-13. Binds to MYB56 at the promoter of FLOWERING LOCUS T (FT). Ubiquitous.

The protein resides in the nucleus. Its subcellular location is the cytoplasm. It participates in protein modification; protein ubiquitination. May act as a substrate-specific adapter of an E3 ubiquitin-protein ligase complex (CUL3-RBX1-BTB) which mediates the ubiquitination and subsequent proteasomal degradation of target proteins. This is BTB/POZ and MATH domain-containing protein 3 from Arabidopsis thaliana (Mouse-ear cress).